Here is a 25-residue protein sequence, read N- to C-terminus: Secapin-1 (25 aa).

The cysteines at positions 9 and 20 are disulfide-linked.

Expressed by the venom gland.

It is found in the secreted. Its function is as follows. Serine protease inhibitor which exhibits antifibrinolytic, antielastolytic and antimicrobial activities. Displays antimicrobial activity against bacteria and fungi. Likely functions in the innate immune response to microbial infection and possibly in the venom, as an antifibrinolytic agent. This chain is Secapin-1, found in Apis mellifera (Honeybee).